The primary structure comprises 620 residues: Cell fusion protein cfr1 (620 aa).

Residues 79–169 (LPSPPVLKLK…KHITIKTLRM (91 aa)) enclose the Fibronectin type-III domain. A BRCT domain is found at 167–256 (LRMIDLTGIQ…RLVNVSGFYI (90 aa)). Disordered stretches follow at residues 287-566 (QPKN…PEKA) and 588-620 (KQSS…VNID). Residues 303–314 (APQQTTQQGTQN) show a composition bias toward polar residues. Over residues 315 to 330 (SANAEPSSSASVPAEA) the composition is skewed to low complexity. The segment covering 352–375 (SKPNEAPTSSENIKADQPENSTKQ) has biased composition (polar residues). Residues 382–392 (MQIKDAEEHSN) are compositionally biased toward basic and acidic residues. A compositionally biased stretch (polar residues) spans 393 to 406 (LESTPAAQQTSEVE). A compositionally biased stretch (low complexity) spans 424–434 (NVNEENNTPET). The span at 445–468 (NTAAESLINQEETTSGEAVTKSTV) shows a compositional bias: polar residues. Residues 472-484 (ANEEEAEPNEIIE) are compositionally biased toward acidic residues. Residues 506–515 (NNANSENANG) show a composition bias toward polar residues. Basic and acidic residues predominate over residues 517–537 (TDEKIIEAPLDTKENSDDDKP).

Belongs to the CHS5 family.

It localises to the golgi apparatus. Its function is as follows. Required for cell fusion, independently of fus1. Appears to have a role in transporting proteins that are involved in mating. May act as a scaffold to retain cell fusion proteins in the cisternae of the Golgi. Degraded at the onset of mating and this leads to release of cell fusion proteins. In Schizosaccharomyces pombe (strain 972 / ATCC 24843) (Fission yeast), this protein is Cell fusion protein cfr1 (cfr1).